The sequence spans 694 residues: uncharacterized protein (694 aa).

Residues 15-51 adopt a coiled-coil conformation; the sequence is HKEKMELLDQFDNERKEWESQWKIMQKKIEELCREVK. Disordered regions lie at residues 259-286, 461-490, and 643-680; these read LKRN…EQAY, QNHS…QSND, and NASH…RRTT. Polar residues-rich tracts occupy residues 272–283 and 476–490; these read STSRNFPSSDSE and DTSS…QSND. Residues 663–677 are compositionally biased toward low complexity; that stretch reads SRWASRSPSAPPALR.

This is an uncharacterized protein from Homo sapiens (Human).